Here is a 166-residue protein sequence, read N- to C-terminus: Ureidoglycolate lyase (166 aa).

The protein belongs to the ureidoglycolate lyase family. Homodimer. Ni(2+) is required as a cofactor.

The catalysed reaction is (S)-ureidoglycolate = urea + glyoxylate. Its pathway is nitrogen metabolism; (S)-allantoin degradation. Functionally, catalyzes the catabolism of the allantoin degradation intermediate (S)-ureidoglycolate, generating urea and glyoxylate. Involved in the utilization of allantoin as nitrogen source. This Agrobacterium fabrum (strain C58 / ATCC 33970) (Agrobacterium tumefaciens (strain C58)) protein is Ureidoglycolate lyase.